A 502-amino-acid polypeptide reads, in one-letter code: ATP synthase subunit alpha (502 aa).

169-176 (GDRQTGKT) lines the ATP pocket.

This sequence belongs to the ATPase alpha/beta chains family. F-type ATPases have 2 components, CF(1) - the catalytic core - and CF(0) - the membrane proton channel. CF(1) has five subunits: alpha(3), beta(3), gamma(1), delta(1), epsilon(1). CF(0) has three main subunits: a(1), b(2) and c(9-12). The alpha and beta chains form an alternating ring which encloses part of the gamma chain. CF(1) is attached to CF(0) by a central stalk formed by the gamma and epsilon chains, while a peripheral stalk is formed by the delta and b chains.

The protein resides in the cell inner membrane. It catalyses the reaction ATP + H2O + 4 H(+)(in) = ADP + phosphate + 5 H(+)(out). In terms of biological role, produces ATP from ADP in the presence of a proton gradient across the membrane. The alpha chain is a regulatory subunit. In Trichlorobacter lovleyi (strain ATCC BAA-1151 / DSM 17278 / SZ) (Geobacter lovleyi), this protein is ATP synthase subunit alpha.